The following is a 148-amino-acid chain: Macrodomain Ter protein (148 aa).

The protein belongs to the MatP family. In terms of assembly, homodimer.

The protein resides in the cytoplasm. Required for spatial organization of the terminus region of the chromosome (Ter macrodomain) during the cell cycle. Prevents early segregation of duplicated Ter macrodomains during cell division. Binds specifically to matS, which is a 13 bp signature motif repeated within the Ter macrodomain. The chain is Macrodomain Ter protein from Haemophilus influenzae (strain PittGG).